Here is a 159-residue protein sequence, read N- to C-terminus: Heavy metal-associated isoprenylated plant protein 28 (159 aa).

Residues 10–73 form the HMA domain; that stretch reads LQTIEMRVHM…KVRKTGRRAE (64 aa). Positions 21 and 24 each coordinate a metal cation. Cys-156 bears the Cysteine methyl ester mark. A lipid anchor (S-farnesyl cysteine) is attached at Cys-156. Residues 157-159 constitute a propeptide, removed in mature form; it reads SIM.

The protein belongs to the HIPP family.

Heavy-metal-binding protein. The polypeptide is Heavy metal-associated isoprenylated plant protein 28 (Arabidopsis thaliana (Mouse-ear cress)).